The primary structure comprises 690 residues: CREB-H transcription factor homolog let-607 (690 aa).

3 disordered regions span residues 87–118, 166–192, and 205–253; these read NDNCYSLSPPDSGSLPISPASTSPSSYHSSGG, SAVHQNQQQQQRRLNQAGFPHQNSNGL, and PASI…KYPP. 3 stretches are compositionally biased toward low complexity: residues 100–116, 170–181, and 213–236; these read SLPISPASTSPSSYHSS, QNQQQQQRRLNQ, and PSSSFNPQSTSSTPATSSSSSSST. Residues 284-347 form the bZIP domain; sequence DLKRIRRKIR…QSVISQLKKL (64 aa). The tract at residues 286–321 is basic motif; sequence KRIRRKIRNKRSAQTSRKRKQDYIEQLEDRVSESTK. Positions 295 to 350 form a coiled coil; the sequence is KRSAQTSRKRKQDYIEQLEDRVSESTKENQALKQQIERLSSENQSVISQLKKLQAQ. The tract at residues 326-333 is leucine-zipper; sequence LKQQIERL. Residues 451 to 464 show a composition bias toward polar residues; that stretch reads HNNSKYPASGNQNH. Disordered stretches follow at residues 451–495 and 509–536; these read HNNS…SMYR and GARKGSSTSSSSASSVASSTSTSSATSP. Composition is skewed to low complexity over residues 480–492 and 514–535; these read QPKQSYQQQHQPS and SSTSSSSASSVASSTSTSSATS.

The protein belongs to the bZIP family.

It is found in the nucleus. Its function is as follows. Probable transcription factor, required during migration of the gonadal distal tip cells (DTC). Probably regulates cell adhesion of DTCs via modulation of expression of genes involved in integrin-mediated adhesion, including tln-1, src-1, and integrin pat-2. Modulates expression of genes involved in protein trafficking during embryogenesis, including emo-1, sec-61, calu-1, sec-24.1, enpl-1, sar-1 and tfg-1. The polypeptide is CREB-H transcription factor homolog let-607 (Caenorhabditis elegans).